A 153-amino-acid chain; its full sequence is MSKKYIVTWDMLQIYARELAQKLLPVNQWKGIIAVSRGGLIPSALLARELNIRFVDTICVSSYDHNRLRDLKILKYAAGNSSQIIIVDDLVDTGGTGKIIRNLYPKAKFVTIFAKPMGKLLVDEYIIDIPQKVWIEQPWDMGVTYQSPLVRDL.

5-phospho-alpha-D-ribose 1-diphosphate contacts are provided by residues 37–38 (RG), Arg69, and 88–96 (DDLVDTGGT). Residue Arg69 coordinates GMP. Asp89 provides a ligand contact to Mg(2+). Residues Asp92 and Ile135 each contribute to the guanine site. The xanthine site is built by Asp92 and Ile135. Residues 92 to 96 (DTGGT) and 134 to 135 (WI) each bind GMP.

This sequence belongs to the purine/pyrimidine phosphoribosyltransferase family. XGPT subfamily. In terms of assembly, homotetramer. Mg(2+) is required as a cofactor.

Its subcellular location is the cell membrane. The enzyme catalyses GMP + diphosphate = guanine + 5-phospho-alpha-D-ribose 1-diphosphate. The catalysed reaction is XMP + diphosphate = xanthine + 5-phospho-alpha-D-ribose 1-diphosphate. It catalyses the reaction IMP + diphosphate = hypoxanthine + 5-phospho-alpha-D-ribose 1-diphosphate. Its pathway is purine metabolism; GMP biosynthesis via salvage pathway; GMP from guanine: step 1/1. It participates in purine metabolism; XMP biosynthesis via salvage pathway; XMP from xanthine: step 1/1. Purine salvage pathway enzyme that catalyzes the transfer of the ribosyl-5-phosphate group from 5-phospho-alpha-D-ribose 1-diphosphate (PRPP) to the N9 position of the 6-oxopurines guanine and xanthine to form the corresponding ribonucleotides GMP (guanosine 5'-monophosphate) and XMP (xanthosine 5'-monophosphate), with the release of PPi. To a lesser extent, also acts on hypoxanthine. The sequence is that of Xanthine-guanine phosphoribosyltransferase from Buchnera aphidicola subsp. Baizongia pistaciae (strain Bp).